Here is a 318-residue protein sequence, read N- to C-terminus: uncharacterized protein (318 aa).

This sequence belongs to the asfivirus F317L family.

Its subcellular location is the virion. This is an uncharacterized protein from African swine fever virus (isolate Tick/Malawi/Lil 20-1/1983) (ASFV).